Here is a 539-residue protein sequence, read N- to C-terminus: Protein mushroom body miniature (539 aa).

Positions 1–11 (MHNSGGQSGWN) are enriched in polar residues. Positions 1–345 (MHNSGGQSGW…EDDKKARKQK (345 aa)) are disordered. Residues 67–79 (KFRDPQQELDNHQ) show a composition bias toward basic and acidic residues. The segment covering 80 to 89 (PNKRGGRRNR) has biased composition (basic residues). Positions 90–101 (GGGGGGGGWGGR) are enriched in gly residues. Basic and acidic residues predominate over residues 199–208 (IKKEKEMEHK). A compositionally biased stretch (low complexity) spans 268–289 (VASTPKPKAVKPVSSSDSSTSD). 2 positions are modified to phosphoserine: Ser288 and Ser290. Phosphothreonine occurs at positions 292 and 327. Over residues 327–336 (TDEEESTEPE) the composition is skewed to acidic residues. Ser332 carries the phosphoserine modification. Phosphothreonine is present on Thr333. 2 consecutive CCHC-type zinc fingers follow at residues 354–367 (CGIC…SFQC) and 371–386 (CRNC…NCPN). Residues 421 to 513 (VTAPVSAKPK…AASLPPQVFP (93 aa)) form a disordered region. Residues 428 to 447 (KPKKDKKASIKKIKKSSQKR) show a composition bias toward basic residues. A compositionally biased stretch (acidic residues) spans 456-480 (DEEDDEEDDDEDEDDSSESDDSESS).

Post-translationally, may be phosphorylated in vivo by CkIIalpha. mbm and CkIIalpha colocalize to the nucleolus and mbm is phosphorylated in vitro by CkIIalpha. In terms of tissue distribution, shows widespread expression in third instar larval brain with no apparent difference between males and females (at protein level). Detected at low levels in the mushroom body neuropil and is also expressed in many cells of the brain outside the mushroom body (at protein level). Not detected in third instar larval brain cells in anaphase (at protein level).

Its subcellular location is the nucleus. It is found in the nucleolus. It localises to the cytoplasm. Functionally, required for small ribosomal subunit biogenesis in neuroblasts. Plays a role in mushroom body development. In Drosophila melanogaster (Fruit fly), this protein is Protein mushroom body miniature.